The sequence spans 1756 residues: Multifunctional conjugation protein TraI (1756 aa).

The segment at 1 to 330 is DNA relaxase; the sequence is MLSFSVVKSA…TQAIAGLSER (330 aa). The active-site O-(5'-phospho-DNA)-tyrosine intermediate; for relaxase activity is Tyr-16. Residue Tyr-17 is the Relaxase of the active site. Residues His-146, His-157, and His-159 each coordinate Mg(2+). A DNA helicase I region spans residues 950–1500; it reads GKEAVTPLME…LRDVAAGRAV (551 aa). 992–999 lines the ATP pocket; that stretch reads GYAGVGKT. Residues 1719 to 1753 adopt a coiled-coil conformation; it reads EQEAVREVARENLLQERLQQIERDMVRDLQKEKTL.

To TraI of plasmid F. In terms of assembly, monomer. Part of the relaxosome, a complex composed of plasmid-encodes TraI, TraM, TraY and host-encoded IHF bound to the F plasmid origin of transfer (oriT). Directly contacts coupling protein TraD. Seems to directly contact TraM via its C-terminus. Mg(2+) serves as cofactor.

The protein resides in the cytoplasm. It carries out the reaction ATP-independent breakage of single-stranded DNA, followed by passage and rejoining.. The enzyme catalyses ATP + H2O = ADP + phosphate + H(+). Functionally, conjugative DNA transfer (CDT) is the unidirectional transfer of ssDNA plasmid from a donor to a recipient cell. It is the central mechanism by which antibiotic resistance and virulence factors are propagated in bacterial populations. Part of the relaxosome, which facilitates a site- and strand-specific cut in the origin of transfer by TraI, at the nic site. Relaxosome formation requires binding of IHF and TraY to the oriT region, which then facilitates binding of TraI relaxase. TraI forms a covalent 5'-phosphotyrosine intermediate linkage to the ssDNA. The transesterified T-strand moves from the donor cell to the recipient cell in a 5'to 3' direction, with the DNA helicase activity of TraI unwinding the DNA. DNA transfer occurs via the conjugative pore (transferosome) an intercellular junction mediated by a type IV secretion system, with TraD providing the means to link the relaxosome to the conjugative pore. The relaxase completes DNA transfer by reversing the covalent phosphotyrosine linkage and releasing the T-strand. TraI has also been identified as DNA helicase I. DNA. helicase I is a potent, highly processive DNA-dependent ATPase, able to unwind about 1.1 kb dsDNA per second in a 5' to 3' manner. The polypeptide is Multifunctional conjugation protein TraI (traI) (Escherichia coli).